The primary structure comprises 431 residues: Histidinol dehydrogenase (431 aa).

Residues Tyr-127, Gln-189, and Asn-212 each contribute to the NAD(+) site. Ser-237, Gln-259, and His-262 together coordinate substrate. Zn(2+)-binding residues include Gln-259 and His-262. Active-site proton acceptor residues include Glu-326 and His-327. Substrate is bound by residues His-327, Asp-360, Glu-414, and His-419. Asp-360 is a binding site for Zn(2+). His-419 lines the Zn(2+) pocket.

The protein belongs to the histidinol dehydrogenase family. It depends on Zn(2+) as a cofactor.

The enzyme catalyses L-histidinol + 2 NAD(+) + H2O = L-histidine + 2 NADH + 3 H(+). It functions in the pathway amino-acid biosynthesis; L-histidine biosynthesis; L-histidine from 5-phospho-alpha-D-ribose 1-diphosphate: step 9/9. Its function is as follows. Catalyzes the sequential NAD-dependent oxidations of L-histidinol to L-histidinaldehyde and then to L-histidine. This is Histidinol dehydrogenase from Xanthomonas campestris pv. campestris (strain ATCC 33913 / DSM 3586 / NCPPB 528 / LMG 568 / P 25).